Reading from the N-terminus, the 447-residue chain is Citrate synthase-like protein oryE (447 aa).

Residues histidine 331 and aspartate 387 contribute to the active site.

Belongs to the citrate synthase family.

It participates in secondary metabolite biosynthesis. In terms of biological role, citrate synthase-like protein; part of the gene cluster that mediates the biosynthesis of oryzines, natural products with an unusual maleidride backbone. The two subunits of the fungal fatty acid synthase oryfasA and oryfasB probably form octenoic acid. This fatty acid is most likely activated by the acyl-CoA ligase oryP to give octenyl-CoA before the citrate synthase-like protein oryE catalyzes condensation with oxaloacetate to form tricarboxylic acid. The next steps of the pathways are conjectural, but a favorite possible route has been proposed, beginning with decarboxylation and concomitant dehydration by the decarboxylase oryM, followed by tautomerization, which may lead to the production of a diene intermediate. Reduction of this diene intermediate could give the known metabolite piliformic acid. On the pathway to oryzine B and oryzine A, however, hydroxylation of the diene by the alpha-ketoglutarate-dependent dioxygenase oryG and lactonisation by the lactonohydrolases oryH or oryL could give oryzine B directly. Finally, enoyl reduction by the dehydrogenase oryD would then convert oryzine B into oryzine A. The polypeptide is Citrate synthase-like protein oryE (Aspergillus oryzae (strain ATCC 42149 / RIB 40) (Yellow koji mold)).